The following is a 320-amino-acid chain: Acetyl-coenzyme A carboxylase carboxyl transferase subunit alpha (320 aa).

A CoA carboxyltransferase C-terminal domain is found at 33 to 294 (AFDTEIQALR…GDAVEDELKA (262 aa)).

This sequence belongs to the AccA family. In terms of assembly, acetyl-CoA carboxylase is a heterohexamer composed of biotin carboxyl carrier protein (AccB), biotin carboxylase (AccC) and two subunits each of ACCase subunit alpha (AccA) and ACCase subunit beta (AccD).

It is found in the cytoplasm. It catalyses the reaction N(6)-carboxybiotinyl-L-lysyl-[protein] + acetyl-CoA = N(6)-biotinyl-L-lysyl-[protein] + malonyl-CoA. It functions in the pathway lipid metabolism; malonyl-CoA biosynthesis; malonyl-CoA from acetyl-CoA: step 1/1. Functionally, component of the acetyl coenzyme A carboxylase (ACC) complex. First, biotin carboxylase catalyzes the carboxylation of biotin on its carrier protein (BCCP) and then the CO(2) group is transferred by the carboxyltransferase to acetyl-CoA to form malonyl-CoA. This Caulobacter vibrioides (strain ATCC 19089 / CIP 103742 / CB 15) (Caulobacter crescentus) protein is Acetyl-coenzyme A carboxylase carboxyl transferase subunit alpha.